The sequence spans 1361 residues: DNA-directed RNA polymerase subunit beta'' (1361 aa).

Zn(2+)-binding residues include cysteine 224, cysteine 295, cysteine 302, and cysteine 305.

It belongs to the RNA polymerase beta' chain family. RpoC2 subfamily. As to quaternary structure, in plastids the minimal PEP RNA polymerase catalytic core is composed of four subunits: alpha, beta, beta', and beta''. When a (nuclear-encoded) sigma factor is associated with the core the holoenzyme is formed, which can initiate transcription. Requires Zn(2+) as cofactor.

Its subcellular location is the plastid. It localises to the chloroplast. It carries out the reaction RNA(n) + a ribonucleoside 5'-triphosphate = RNA(n+1) + diphosphate. Its function is as follows. DNA-dependent RNA polymerase catalyzes the transcription of DNA into RNA using the four ribonucleoside triphosphates as substrates. This Spinacia oleracea (Spinach) protein is DNA-directed RNA polymerase subunit beta''.